Here is a 1245-residue protein sequence, read N- to C-terminus: Trafficking protein particle complex II-specific subunit 130 homolog (1245 aa).

Disordered regions lie at residues 488–524 (GDGS…TSLP) and 884–903 (HVGG…TRKV). Low complexity-rich tracts occupy residues 495 to 507 (ANSK…SASN) and 888 to 898 (TDASKTSSSST).

The protein belongs to the TMEM1 family. In terms of assembly, part of the multisubunit TRAPP (transport protein particle) II complex composed of BET3, BET5, TRS20, TRS23, TRS31, TRS33, TRS65, TRS85, TRS120 and TRS130.

It localises to the golgi apparatus. Its subcellular location is the trans-Golgi network. It is found in the early endosome. In terms of biological role, specific subunit of the TRAPP II complex, a highly conserved vesicle tethering complex that is required for the proper transport of proteins in post-Golgi trafficking pathways to the growing cell plate in mitotic active cells. In Oryza sativa subsp. japonica (Rice), this protein is Trafficking protein particle complex II-specific subunit 130 homolog.